The chain runs to 297 residues: Nucleotide-binding protein Bxeno_A0336 (297 aa).

Residue 8-15 coordinates ATP; it reads GISGSGKS. A GTP-binding site is contributed by 57-60; the sequence is DARS.

This sequence belongs to the RapZ-like family.

Its function is as follows. Displays ATPase and GTPase activities. The protein is Nucleotide-binding protein Bxeno_A0336 of Paraburkholderia xenovorans (strain LB400).